A 98-amino-acid chain; its full sequence is MSPMYFSFSSAFMLGLMGLAFNRSHLLSALLCLEGMMLTLFVATATWSLMLNSTSSSILPMILLTFSACEASAGLAILVATSRSHGSDNLQNLNLLQC.

The next 3 membrane-spanning stretches (helical) occupy residues 1–21 (MSPMYFSFSSAFMLGLMGLAF), 26–46 (LLSALLCLEGMMLTLFVATAT), and 58–78 (ILPMILLTFSACEASAGLAIL).

Belongs to the complex I subunit 4L family.

The protein localises to the mitochondrion membrane. It catalyses the reaction a ubiquinone + NADH + 5 H(+)(in) = a ubiquinol + NAD(+) + 4 H(+)(out). Core subunit of the mitochondrial membrane respiratory chain NADH dehydrogenase (Complex I) which catalyzes electron transfer from NADH through the respiratory chain, using ubiquinone as an electron acceptor. Part of the enzyme membrane arm which is embedded in the lipid bilayer and involved in proton translocation. This Scyliorhinus canicula (Small-spotted catshark) protein is NADH-ubiquinone oxidoreductase chain 4L (MT-ND4L).